The sequence spans 218 residues: tRNA (guanosine(18)-2'-O)-methyltransferase (218 aa).

The S-adenosyl-L-methionine site is built by Thr-111 and Ile-154.

Belongs to the class IV-like SAM-binding methyltransferase superfamily. RNA methyltransferase TrmH family.

It carries out the reaction guanosine(18) in tRNA + S-adenosyl-L-methionine = 2'-O-methylguanosine(18) in tRNA + S-adenosyl-L-homocysteine + H(+). Functionally, catalyzes the 2'-O methylation of guanosine at position 18 in tRNA. This Borreliella burgdorferi (strain ATCC 35210 / DSM 4680 / CIP 102532 / B31) (Borrelia burgdorferi) protein is tRNA (guanosine(18)-2'-O)-methyltransferase.